Reading from the N-terminus, the 283-residue chain is Aldo-keto reductase MSMEG_2407/MSMEI_2346 (283 aa).

Tyr-58 acts as the Proton donor in catalysis. NADPH is bound by residues Gly-196, Leu-198, Val-200, Ile-236, Arg-238, Ser-239, Ala-240, Arg-244, Ser-247, Asn-248, and Arg-274.

The protein belongs to the aldo/keto reductase family. As to quaternary structure, monomer.

Inhibited by the antituberculosis drug isoniazid (INH). Catalyzes the NADPH-dependent reduction of dicarbonyls. Exhibits narrow substrate specificity, with preferential activity against the dicarbonyl substrates phenylglyoxal and methylglyoxal. Exhibits weak activity with ethyl-2-methyl acetoacetate. Cannot use NADH. May play an important role in the detoxification of methylglyoxal. The chain is Aldo-keto reductase MSMEG_2407/MSMEI_2346 from Mycolicibacterium smegmatis (strain ATCC 700084 / mc(2)155) (Mycobacterium smegmatis).